The following is a 1407-amino-acid chain: DNA-directed RNA polymerase subunit beta' (1407 aa).

4 residues coordinate Zn(2+): Cys70, Cys72, Cys85, and Cys88. Positions 460, 462, and 464 each coordinate Mg(2+). Zn(2+) is bound by residues Cys814, Cys888, Cys895, and Cys898.

Belongs to the RNA polymerase beta' chain family. The RNAP catalytic core consists of 2 alpha, 1 beta, 1 beta' and 1 omega subunit. When a sigma factor is associated with the core the holoenzyme is formed, which can initiate transcription. Mg(2+) is required as a cofactor. Requires Zn(2+) as cofactor.

It carries out the reaction RNA(n) + a ribonucleoside 5'-triphosphate = RNA(n+1) + diphosphate. Its function is as follows. DNA-dependent RNA polymerase catalyzes the transcription of DNA into RNA using the four ribonucleoside triphosphates as substrates. The polypeptide is DNA-directed RNA polymerase subunit beta' (Erwinia tasmaniensis (strain DSM 17950 / CFBP 7177 / CIP 109463 / NCPPB 4357 / Et1/99)).